We begin with the raw amino-acid sequence, 323 residues long: Sphingolipid delta(4)-desaturase DES1 (323 aa).

The N-myristoyl glycine moiety is linked to residue G2. Helical transmembrane passes span 41–61 and 68–88; these read SNLI…FYLV and WVLF…TLAI. The Histidine box-1 signature appears at 89–93; it reads HEVSH. The helical transmembrane segment at 102-122 threads the bilayer; that stretch reads AMWNRWFGIFANLPIGVPYSV. Positions 128–132 match the Histidine box-2 motif; it reads HMDHH. 3 consecutive transmembrane segments (helical) span residues 152 to 172, 184 to 204, and 209 to 229; these read FFCT…FYAF, YLEI…YYVL, and LVYM…SGHF. The Histidine box-3 motif lies at 259–263; that stretch reads HNEHH. S307 is modified (phosphoserine).

This sequence belongs to the fatty acid desaturase type 1 family. DEGS subfamily. As to quaternary structure, interacts with RLBP1; the interaction increases synthesis of chromophore-precursors by DEGS1. Post-translationally, myristoylation can target the enzyme to the mitochondria leading to an increase in ceramide levels.

The protein localises to the mitochondrion membrane. Its subcellular location is the endoplasmic reticulum membrane. The catalysed reaction is an N-acylsphinganine + 2 Fe(II)-[cytochrome b5] + O2 + 2 H(+) = an N-acylsphing-4-enine + 2 Fe(III)-[cytochrome b5] + 2 H2O. The enzyme catalyses all-trans-retinol = 11-cis-retinol. It catalyses the reaction all-trans-retinol = 9-cis-retinol. It carries out the reaction all-trans-retinol = 13-cis-retinol. The catalysed reaction is 11-cis-retinol = 13-cis-retinol. The enzyme catalyses 11-cis-retinol = 9-cis-retinol. Has sphingolipid-delta-4-desaturase activity. Converts D-erythro-sphinganine to D-erythro-sphingosine (E-sphing-4-enine). Catalyzes the equilibrium isomerization of retinols. The chain is Sphingolipid delta(4)-desaturase DES1 (DEGS1) from Bos taurus (Bovine).